The following is a 380-amino-acid chain: 1-deoxy-D-xylulose 5-phosphate reductoisomerase (380 aa).

NADPH-binding residues include Thr-10, Gly-11, Ser-12, Ile-13, Gly-35, Arg-36, Asn-37, and Asn-121. 1-deoxy-D-xylulose 5-phosphate is bound at residue Lys-122. Glu-123 provides a ligand contact to NADPH. Mn(2+) is bound at residue Asp-147. 4 residues coordinate 1-deoxy-D-xylulose 5-phosphate: Ser-148, Glu-149, Ser-173, and His-196. Position 149 (Glu-149) interacts with Mn(2+). Gly-202 contacts NADPH. Residues Ser-209, Asn-214, Lys-215, and Glu-218 each contribute to the 1-deoxy-D-xylulose 5-phosphate site. Residue Glu-218 coordinates Mn(2+).

The protein belongs to the DXR family. Mg(2+) serves as cofactor. Mn(2+) is required as a cofactor.

It catalyses the reaction 2-C-methyl-D-erythritol 4-phosphate + NADP(+) = 1-deoxy-D-xylulose 5-phosphate + NADPH + H(+). It participates in isoprenoid biosynthesis; isopentenyl diphosphate biosynthesis via DXP pathway; isopentenyl diphosphate from 1-deoxy-D-xylulose 5-phosphate: step 1/6. Functionally, catalyzes the NADPH-dependent rearrangement and reduction of 1-deoxy-D-xylulose-5-phosphate (DXP) to 2-C-methyl-D-erythritol 4-phosphate (MEP). This is 1-deoxy-D-xylulose 5-phosphate reductoisomerase from Agathobacter rectalis (strain ATCC 33656 / DSM 3377 / JCM 17463 / KCTC 5835 / VPI 0990) (Eubacterium rectale).